A 400-amino-acid chain; its full sequence is Lysophospholipid transporter LplT (400 aa).

Helical transmembrane passes span 19–39 (VIVAQFLSAFGDNALLFATLA), 53–73 (VLQMVFVGAYILFAPFVGQIA), 91–111 (AGAAGVCLGINPFVGYTLVGI), 139–159 (LMEASTIAAILLGSVAGGVLA), 164–184 (IAALVACALAYAGAVAANLFI), 195–213 (SWRLSAMTRSFFCACVVLW), 227–247 (LFWGAGVTLRFLLVLWVPVAL), 257–277 (YLNAMVAVGIVVGAGAAAKLV), 281–301 (TVSRCMPAGILIGVVVAIFSL), 304–324 (ALLPAYALLLLIGMLGGFFVV), 352–372 (NSAMLLMLGLYSLAVLVGVPA), and 373–393 (VAIGIGFGVLFALAIAALWIW).

This sequence belongs to the major facilitator superfamily. LplT (TC 2.A.1.42) family.

The protein resides in the cell inner membrane. In terms of biological role, catalyzes the facilitated diffusion of 2-acyl-glycero-3-phosphoethanolamine (2-acyl-GPE) into the cell. The polypeptide is Lysophospholipid transporter LplT (Salmonella schwarzengrund (strain CVM19633)).